The chain runs to 40 residues: Competence and sporulation stimulating factor (40 aa).

Positions 1-35 (MKLKSKLFVICLAAAAIFTAAGVSANAEALDFHVT) are excised as a propeptide.

It belongs to the Phr family. As to quaternary structure, interacts with RapC and inhibits its interaction with ComA. In terms of processing, secreted with a propeptide domain, which is cleaved in the cell wall by the secreted serine proteases subtilisin, Epr and Vpr to produce a mature signaling peptide. Contains a predicted signal peptide cleavage site in the N-terminal region, however the propeptide is probably subject to only one processing event, at the N-terminal end of the mature peptide.

The protein localises to the secreted. The protein resides in the cytoplasm. Its subcellular location is the host cell. Its function is as follows. Signaling molecule that serves as a cell density signal for both genetic competence development and sporulation. Secreted during production, but the mature peptide acts intracellularly, indicating that it needs to be imported into the cell to function. At low concentrations, CSF stimulates expression of the genes controlled by ComA, a transcriptional factor that regulates the development of genetic competence. It includes the srfA operon, which encodes a small protein, ComS, required for competence development, and the surfactin biosynthetic enzymes. Acts by inhibiting RapC, which regulates the activity of ComA. At high concentrations, it inhibits expression of those same ComA-controlled genes, maybe by inhibiting activity of the kinase ComP. In addition, high concentrations of CSF can stimulate sporulation under some conditions. Also inhibits RapB activity, with lower efficiency, but does not act on RapA. Is probably involved in the quorum sensing control of sporulation. CSF is a species-specific signaling molecule that partially compensates for the lack of ComX-mediated communication between different strains of B.subtilis. Functionally, b.subtilis is a well-characterized soil and water saprophyte, but it is also found in enteric flora of many species, including humans. In this environment, CSF can be transported into human intestinal epithelia via OCTN2, a host cell membrane transporter, and can induce cytoprotective heat shock proteins contributing to intestinal homeostasis. In terms of biological role, in addition, in non-domesticated swarming strains of B.subtilis, the residual propeptide exposed on the exterior of the cytoplasmic membrane may have an extracellular role in swarming. This function is probably not dependent on CSF. In Bacillus subtilis (strain 168), this protein is Competence and sporulation stimulating factor.